Reading from the N-terminus, the 314-residue chain is 4-hydroxy-3-methylbut-2-enyl diphosphate reductase (314 aa).

Position 12 (C12) interacts with [4Fe-4S] cluster. Residues H41 and H74 each coordinate (2E)-4-hydroxy-3-methylbut-2-enyl diphosphate. The dimethylallyl diphosphate site is built by H41 and H74. Residues H41 and H74 each coordinate isopentenyl diphosphate. Residue C96 participates in [4Fe-4S] cluster binding. Residue H124 participates in (2E)-4-hydroxy-3-methylbut-2-enyl diphosphate binding. H124 is a dimethylallyl diphosphate binding site. H124 contributes to the isopentenyl diphosphate binding site. Residue E126 is the Proton donor of the active site. T167 serves as a coordination point for (2E)-4-hydroxy-3-methylbut-2-enyl diphosphate. C197 lines the [4Fe-4S] cluster pocket. Positions 225, 226, 227, and 269 each coordinate (2E)-4-hydroxy-3-methylbut-2-enyl diphosphate. Positions 225, 226, 227, and 269 each coordinate dimethylallyl diphosphate. Isopentenyl diphosphate is bound by residues S225, S226, N227, and S269.

The protein belongs to the IspH family. [4Fe-4S] cluster serves as cofactor.

It carries out the reaction isopentenyl diphosphate + 2 oxidized [2Fe-2S]-[ferredoxin] + H2O = (2E)-4-hydroxy-3-methylbut-2-enyl diphosphate + 2 reduced [2Fe-2S]-[ferredoxin] + 2 H(+). The catalysed reaction is dimethylallyl diphosphate + 2 oxidized [2Fe-2S]-[ferredoxin] + H2O = (2E)-4-hydroxy-3-methylbut-2-enyl diphosphate + 2 reduced [2Fe-2S]-[ferredoxin] + 2 H(+). Its pathway is isoprenoid biosynthesis; dimethylallyl diphosphate biosynthesis; dimethylallyl diphosphate from (2E)-4-hydroxy-3-methylbutenyl diphosphate: step 1/1. It functions in the pathway isoprenoid biosynthesis; isopentenyl diphosphate biosynthesis via DXP pathway; isopentenyl diphosphate from 1-deoxy-D-xylulose 5-phosphate: step 6/6. Its function is as follows. Catalyzes the conversion of 1-hydroxy-2-methyl-2-(E)-butenyl 4-diphosphate (HMBPP) into a mixture of isopentenyl diphosphate (IPP) and dimethylallyl diphosphate (DMAPP). Acts in the terminal step of the DOXP/MEP pathway for isoprenoid precursor biosynthesis. The protein is 4-hydroxy-3-methylbut-2-enyl diphosphate reductase of Histophilus somni (strain 2336) (Haemophilus somnus).